Reading from the N-terminus, the 266-residue chain is Undecaprenyl-diphosphatase (266 aa).

7 consecutive transmembrane segments (helical) span residues 8–28 (VLAL…AHLI), 39–59 (QGLA…VIYF), 87–107 (WAVG…HDII), 113–133 (SAQV…FADV), 188–208 (SFLL…LGLV), 219–239 (MIVL…HYFL), and 246–266 (TMLP…FLFW).

It belongs to the UppP family.

Its subcellular location is the cell inner membrane. It carries out the reaction di-trans,octa-cis-undecaprenyl diphosphate + H2O = di-trans,octa-cis-undecaprenyl phosphate + phosphate + H(+). Functionally, catalyzes the dephosphorylation of undecaprenyl diphosphate (UPP). Confers resistance to bacitracin. In Thioalkalivibrio sulfidiphilus (strain HL-EbGR7), this protein is Undecaprenyl-diphosphatase.